Reading from the N-terminus, the 268-residue chain is E3 ubiquitin-protein ligase IAP-3 (268 aa).

BIR repeat units follow at residues 18–84 (KAAR…CPFV) and 111–178 (EAAR…CEYV). Cysteine 148, cysteine 151, histidine 168, and cysteine 175 together coordinate Zn(2+). Residues 221 to 256 (CKICLGAEKTVCFVPCGHVVACGKCAAGVTTCPVCR) form an RING-type zinc finger.

It belongs to the IAP family. Auto-ubiquitinated.

The enzyme catalyses S-ubiquitinyl-[E2 ubiquitin-conjugating enzyme]-L-cysteine + [acceptor protein]-L-lysine = [E2 ubiquitin-conjugating enzyme]-L-cysteine + N(6)-ubiquitinyl-[acceptor protein]-L-lysine.. In terms of biological role, RING-finger E3 ubiquitin ligase required to prevent cellular apoptosis in infected cells. Ubiquitinates and subsequently targets host pro-apoptotic cellular proteins such as HID for degradation by the proteasome. This is E3 ubiquitin-protein ligase IAP-3 (IAP3) from Orgyia pseudotsugata multicapsid polyhedrosis virus (OpMNPV).